Reading from the N-terminus, the 175-residue chain is MNHDFNQDFFSLFGLPRRFAIDAAGLDAAWRAAAAQVHPDRYAASSDADKRSALMLATRVNEGYQTLKSPLNRARYLLQLSGVDTQEENNTRMPADFLMAQMEWRESIDDARADVDALESLSRRLRGEVRDLQTELEAALDARADLDAAAVLVRKLRFMEKLDQEIGDAIESLLD.

The J domain maps to 8-80; the sequence is DFFSLFGLPR…LNRARYLLQL (73 aa).

Belongs to the HscB family. In terms of assembly, interacts with HscA and stimulates its ATPase activity.

Co-chaperone involved in the maturation of iron-sulfur cluster-containing proteins. Seems to help targeting proteins to be folded toward HscA. In Chromobacterium violaceum (strain ATCC 12472 / DSM 30191 / JCM 1249 / CCUG 213 / NBRC 12614 / NCIMB 9131 / NCTC 9757 / MK), this protein is Co-chaperone protein HscB homolog.